The sequence spans 439 residues: Deacetylvindoline O-acetyltransferase (439 aa).

Catalysis depends on histidine 158, which acts as the Proton acceptor. Residues threonine 317–glutamine 344 are a coiled coil. Aspartate 380 functions as the Proton acceptor in the catalytic mechanism.

The protein belongs to the plant acyltransferase family. As to quaternary structure, monomer. In terms of tissue distribution, predominantly expressed in young leaves of mature plants. Low expression in stems and flowers and not detected in roots. Confined to the laticifer and idioblast cells of leaves, stems, and flower buds.

It is found in the cytoplasm. Its subcellular location is the nucleus. It catalyses the reaction 4-O-deacetylvindoline + acetyl-CoA = vindoline + CoA. It participates in alkaloid biosynthesis; vindoline biosynthesis. Functionally, involved in the biosynthesis of vindoline, a precursor of vinblastine and vincristine. The polypeptide is Deacetylvindoline O-acetyltransferase (Catharanthus roseus (Madagascar periwinkle)).